We begin with the raw amino-acid sequence, 387 residues long: Protein REVEILLE 1 (387 aa).

Polar residues-rich tracts occupy residues 1 to 17 (MASS…NASL) and 27 to 37 (KQIQFNDQSFG). Residues 1–44 (MASSPLTANVQGTNASLRNRDEETADKQIQFNDQSFGGNDYAPK) form a disordered region. Residues 50-104 (TITKERERWTDEEHKKFVEALKLYGRAWRRIEEHVGSKTAVQIRSHAQKFFSKVA) form the HTH myb-type domain. Residues 77-100 (WRRIEEHVGSKTAVQIRSHAQKFF) constitute a DNA-binding region (H-T-H motif). Disordered regions lie at residues 105–200 (REAT…TANA), 306–334 (KAVQ…TTEP), and 350–387 (AFSE…HLHL). Basic residues predominate over residues 124 to 134 (RPKRKPAHPYP). The segment covering 141–166 (ADQTSRSVSPSERDTQSPTSVLSTVG) has biased composition (polar residues). Low complexity-rich tracts occupy residues 172–200 (SLDS…TANA) and 312–323 (GSSTGSNTGSVD). The segment covering 324–333 (DTGHTEKTTE) has biased composition (basic and acidic residues).

The protein localises to the nucleus. In terms of biological role, morning-phased transcription factor integrating the circadian clock and auxin pathways. Binds to the evening element (EE) of promoters. Does not act within the central clock, but regulates free auxin levels in a time-of-day specific manner. Positively regulates the expression of YUC8 during the day, but has no effect during the night. Negative regulator of freezing tolerance. The chain is Protein REVEILLE 1 (RVE1) from Arabidopsis thaliana (Mouse-ear cress).